Reading from the N-terminus, the 298-residue chain is GPN-loop GTPase QQT1 (298 aa).

Residue 12–17 (GSGKTT) coordinates GTP. The Gly-Pro-Asn (GPN)-loop; involved in dimer interface signature appears at 69–71 (GPN). Position 173-176 (173-176 (SKID)) interacts with GTP.

It belongs to the GPN-loop GTPase family. As to quaternary structure, heterodimer with QQT2. As to expression, expressed in vascular tissues, root tips, apical and root meristematic regions, and floral primordia.

It is found in the cytoplasm. Its subcellular location is the nucleus. It localises to the cytoskeleton. The protein resides in the spindle. The protein localises to the phragmoplast. Its function is as follows. Small GTPase that is essential for the correct formation of the tangential divisions in early embryos. Associates with microtubule during mitosis and may function in the positioning of the division plane. May participate in the patterning of the early embryo at the octant-dermatogen transition. Is crucial for normal development of the plant. This chain is GPN-loop GTPase QQT1, found in Arabidopsis thaliana (Mouse-ear cress).